A 914-amino-acid chain; its full sequence is Protein GAMETE EXPRESSED 2 (914 aa).

Filamin repeat units follow at residues 249 to 382 (IGYC…IKEV) and 391 to 485 (ACSV…DVNV). The chain crosses the membrane as a helical span at residues 893-913 (LVVVPFSFFSIKLFSLLMVLI).

In tricellular pollen, expressed in mature sperm cells but not in the vegetative cell. In bicellular pollen, detected in the progenitor generative cell. Detected in the egg cell within the female gametophyte.

It localises to the cell membrane. In Arabidopsis thaliana (Mouse-ear cress), this protein is Protein GAMETE EXPRESSED 2 (GEX2).